The chain runs to 106 residues: MIAEQIFIIILVLTVLHTAIERIAKRSLSYSNVNYTYTQSISFLVGYTIVYIIMSHISHAVIISIMIMISYAIYIVIKMRNNQQIQNDIEMFMFGMIAGLGIEIVG.

This is an uncharacterized protein from Thermoproteus tenax virus 1 (strain KRA1) (TTV1).